We begin with the raw amino-acid sequence, 250 residues long: Solute carrier family 66 member 2 (250 aa).

One can recognise a PQ-loop 1 domain in the interval 14–80 (RMLVSWGASC…HHFESPLLWQ (67 aa)). Helical transmembrane passes span 15-35 (MLVSWGASCAMIFGGVVPYIP), 49-69 (FSIYVCLMLLIANILRILFWF), 72-92 (HFESPLLWQSIIMIVTMLLML), 118-138 (FFWHWTRFIDFIQCVLAFTGV), 151-173 (LFVEILGFLAVFTEALLGVPQLY), and 212-232 (FSICGLLQVFVDIAILLQVYL). One can recognise a PQ-loop 2 domain in the interval 149–215 (SPLFVEILGF…NQAPFQFSIC (67 aa)).

It is found in the membrane. The chain is Solute carrier family 66 member 2 (slc66a2) from Xenopus laevis (African clawed frog).